Consider the following 449-residue polypeptide: UDP-N-acetylmuramate--L-alanine ligase (449 aa).

121-127 (GAHGKSS) is an ATP binding site.

It belongs to the MurCDEF family.

The protein localises to the cytoplasm. It catalyses the reaction UDP-N-acetyl-alpha-D-muramate + L-alanine + ATP = UDP-N-acetyl-alpha-D-muramoyl-L-alanine + ADP + phosphate + H(+). It functions in the pathway cell wall biogenesis; peptidoglycan biosynthesis. Functionally, cell wall formation. The chain is UDP-N-acetylmuramate--L-alanine ligase from Helicobacter pylori (strain HPAG1).